The sequence spans 179 residues: Peptidyl-tRNA hydrolase (179 aa).

Y15 serves as a coordination point for tRNA. H20 acts as the Proton acceptor in catalysis. TRNA-binding residues include Y66, N68, and N114.

The protein belongs to the PTH family. As to quaternary structure, monomer.

Its subcellular location is the cytoplasm. It catalyses the reaction an N-acyl-L-alpha-aminoacyl-tRNA + H2O = an N-acyl-L-amino acid + a tRNA + H(+). Functionally, hydrolyzes ribosome-free peptidyl-tRNAs (with 1 or more amino acids incorporated), which drop off the ribosome during protein synthesis, or as a result of ribosome stalling. Catalyzes the release of premature peptidyl moieties from peptidyl-tRNA molecules trapped in stalled 50S ribosomal subunits, and thus maintains levels of free tRNAs and 50S ribosomes. The polypeptide is Peptidyl-tRNA hydrolase (Chlamydia muridarum (strain MoPn / Nigg)).